Here is a 105-residue protein sequence, read N- to C-terminus: Large ribosomal subunit protein uL24 (105 aa).

Belongs to the universal ribosomal protein uL24 family. Part of the 50S ribosomal subunit.

Functionally, one of two assembly initiator proteins, it binds directly to the 5'-end of the 23S rRNA, where it nucleates assembly of the 50S subunit. One of the proteins that surrounds the polypeptide exit tunnel on the outside of the subunit. In Buchnera aphidicola subsp. Cinara cedri (strain Cc), this protein is Large ribosomal subunit protein uL24.